The primary structure comprises 556 residues: Trigger factor (556 aa).

The 87-residue stretch at 169–255 folds into the PPIase FKBP-type domain; the sequence is GDVVVIDFAA…LREIKAKELP (87 aa). Over residues 438–452 the composition is skewed to polar residues; the sequence is VDSEGNPTQAPTSLA. Positions 438 to 556 are disordered; sequence VDSEGNPTQA…KPSKKDKKGK (119 aa). The span at 461–472 shows a compositional bias: acidic residues; that stretch reads PEAEFEADEPEA. Low complexity-rich tracts occupy residues 486-503 and 511-526; these read ETAT…AEAE and EASP…AEAT.

This sequence belongs to the FKBP-type PPIase family. Tig subfamily.

The protein resides in the cytoplasm. It carries out the reaction [protein]-peptidylproline (omega=180) = [protein]-peptidylproline (omega=0). Involved in protein export. Acts as a chaperone by maintaining the newly synthesized protein in an open conformation. Functions as a peptidyl-prolyl cis-trans isomerase. This chain is Trigger factor, found in Synechococcus sp. (strain JA-2-3B'a(2-13)) (Cyanobacteria bacterium Yellowstone B-Prime).